The primary structure comprises 294 residues: MADDPQRNFRSAYYEKVGFRGVEEKKSLEILLKDNPLDVEKLSTFSQRFPLPSMYRIHVWKVLLGILPPHSDSHALVRQYRVDQFEDVSCALTVMRFIHASTPQTEIYLRMFQLENHTLPRRTELRPPDAEDENFLAIARAMEEIVDDPVDCFWLVRCFINQFKHKFGDSIPHLPKSLEHFLSQEDVCLLSHLKASGALALLPYSLWFRRCFAGCLPESSLQRVWDKVISGSCKILVFVAVEILLSHKIVIMGMNQPDAIYHFLSNMPQENTDAIVTKAIDLWHKYCGTPMHSV.

The 183-residue stretch at 50 to 232 folds into the Rab-GAP TBC domain; the sequence is PLPSMYRIHV…RVWDKVISGS (183 aa).

As to quaternary structure, component of the TSC-TBC complex (also named Rhebulator complex), composed of 2 molecules of TSC1, 2 molecules of TSC2 and 1 molecule of TBC1D7.

The protein resides in the lysosome membrane. It localises to the cytoplasmic vesicle. The protein localises to the cytoplasm. Its subcellular location is the cytosol. Its function is as follows. Non-catalytic component of the TSC-TBC complex, a multiprotein complex that acts as a negative regulator of the canonical mTORC1 complex, an evolutionarily conserved central nutrient sensor that stimulates anabolic reactions and macromolecule biosynthesis to promote cellular biomass generation and growth. The TSC-TBC complex acts as a GTPase-activating protein (GAP) for the small GTPase RHEB, a direct activator of the protein kinase activity of mTORC1. In absence of nutrients, the TSC-TBC complex inhibits mTORC1, thereby preventing phosphorylation of ribosomal protein S6 kinase (RPS6KB1 and RPS6KB2) and EIF4EBP1 (4E-BP1) by the mTORC1 signaling. The TSC-TBC complex is inactivated in response to nutrients, relieving inhibition of mTORC1. The sequence is that of TBC1 domain family member 7 (tbc1d7) from Danio rerio (Zebrafish).